The sequence spans 354 residues: Anthranilate phosphoribosyltransferase (354 aa).

Residues Gly-94, Gly-97 to Asp-98, Thr-102, Asn-104 to Thr-107, Lys-122 to Ser-130, and Ser-134 each bind 5-phospho-alpha-D-ribose 1-diphosphate. An anthranilate-binding site is contributed by Gly-94. Ser-106 lines the Mg(2+) pocket. Position 125 (Asn-125) interacts with anthranilate. Arg-180 provides a ligand contact to anthranilate. Mg(2+) is bound by residues Asp-238 and Glu-239.

Belongs to the anthranilate phosphoribosyltransferase family. Homodimer. It depends on Mg(2+) as a cofactor.

The enzyme catalyses N-(5-phospho-beta-D-ribosyl)anthranilate + diphosphate = 5-phospho-alpha-D-ribose 1-diphosphate + anthranilate. Its pathway is amino-acid biosynthesis; L-tryptophan biosynthesis; L-tryptophan from chorismate: step 2/5. Catalyzes the transfer of the phosphoribosyl group of 5-phosphorylribose-1-pyrophosphate (PRPP) to anthranilate to yield N-(5'-phosphoribosyl)-anthranilate (PRA). In Streptomyces griseus subsp. griseus (strain JCM 4626 / CBS 651.72 / NBRC 13350 / KCC S-0626 / ISP 5235), this protein is Anthranilate phosphoribosyltransferase.